A 1741-amino-acid chain; its full sequence is DNA-directed RNA polymerase III subunit RPC1 (1741 aa).

Zn(2+) contacts are provided by Cys79, Cys82, Cys89, His92, Cys119, Cys122, and Cys160. Residues Asp722, Asp724, and Asp726 each contribute to the Mg(2+) site. The bridging helix stretch occupies residues 1099–1111 (PFEFLAHARAGRD). A disordered region spans residues 1719–1741 (RHANKRSWSRGKERHASLKPKNR).

It belongs to the RNA polymerase beta' chain family. In terms of assembly, component of the RNA polymerase III (Pol III) complex consisting of 17 subunits.

The protein localises to the nucleus. The catalysed reaction is RNA(n) + a ribonucleoside 5'-triphosphate = RNA(n+1) + diphosphate. In terms of biological role, DNA-dependent RNA polymerase catalyzes the transcription of DNA into RNA using the four ribonucleoside triphosphates as substrates. Largest and catalytic core component of RNA polymerase III which synthesizes small RNAs, such as 5S rRNA and tRNAs. Forms the polymerase active center together with the second largest subunit. A single-stranded DNA template strand of the promoter is positioned within the central active site cleft of Pol III. A bridging helix emanates from RPC1 and crosses the cleft near the catalytic site and is thought to promote translocation of Pol III by acting as a ratchet that moves the RNA-DNA hybrid through the active site by switching from straight to bent conformations at each step of nucleotide addition. The sequence is that of DNA-directed RNA polymerase III subunit RPC1 (RPOA3) from Giardia intestinalis (Giardia lamblia).